The chain runs to 117 residues: MSGVIAPDRVDDKRRMEHSQNMALTITIPAELASRLRASAEAEGKDVDAYAIDALHVMSDEDWGYTDDDAYWRELRAHSDEVRRDGGIPLEDVKRWVASWDTENELPPPEPRIKARG.

Functionally, antitoxin component of a type II toxin-antitoxin (TA) system. Neutralizes the effect of cognate toxin RelE3, but no other RelE or ParE toxin. The polypeptide is Antitoxin RelB3 (relB3) (Caulobacter vibrioides (strain ATCC 19089 / CIP 103742 / CB 15) (Caulobacter crescentus)).